We begin with the raw amino-acid sequence, 286 residues long: Aspartate-semialdehyde dehydrogenase (286 aa).

NADP(+) is bound by residues 10–13 (RGMV), 37–38 (TS), and Gln-74. Arg-103 is a binding site for phosphate. Cys-136 serves as the catalytic Acyl-thioester intermediate. Position 163 (Gln-163) interacts with substrate. NADP(+) is bound by residues 166-167 (SG) and Pro-194. Glu-242 lines the substrate pocket. A phosphate-binding site is contributed by Lys-245. Arg-269 contacts substrate. His-276 (proton acceptor) is an active-site residue.

It belongs to the aspartate-semialdehyde dehydrogenase family. In terms of assembly, homodimer.

The enzyme catalyses L-aspartate 4-semialdehyde + phosphate + NADP(+) = 4-phospho-L-aspartate + NADPH + H(+). Its pathway is amino-acid biosynthesis; L-lysine biosynthesis via DAP pathway; (S)-tetrahydrodipicolinate from L-aspartate: step 2/4. The protein operates within amino-acid biosynthesis; L-methionine biosynthesis via de novo pathway; L-homoserine from L-aspartate: step 2/3. It participates in amino-acid biosynthesis; L-threonine biosynthesis; L-threonine from L-aspartate: step 2/5. Functionally, catalyzes the NADPH-dependent formation of L-aspartate-semialdehyde (L-ASA) by the reductive dephosphorylation of L-aspartyl-4-phosphate. This is Aspartate-semialdehyde dehydrogenase (asd) from Actinobacillus pleuropneumoniae (Haemophilus pleuropneumoniae).